The chain runs to 484 residues: Arginyl-tRNA--protein transferase 1 (484 aa).

This sequence belongs to the R-transferase family.

It catalyses the reaction an N-terminal L-alpha-aminoacyl-[protein] + L-arginyl-tRNA(Arg) = an N-terminal L-arginyl-L-aminoacyl-[protein] + tRNA(Arg) + H(+). Its function is as follows. Involved in the post-translational conjugation of arginine to the N-terminal aspartate or glutamate of a protein. This arginylation is required for degradation of the protein via the ubiquitin pathway. Does not arginylate cysteine residues. The protein is Arginyl-tRNA--protein transferase 1 (Ate1) of Drosophila melanogaster (Fruit fly).